The primary structure comprises 807 residues: uncharacterized protein (807 aa).

It belongs to the IIV-6 155L family.

This is an uncharacterized protein from Aedes vexans (Inland floodwater mosquito).